Reading from the N-terminus, the 322-residue chain is Phosphatidylserine decarboxylase proenzyme (322 aa).

Catalysis depends on charge relay system; for autoendoproteolytic cleavage activity residues D90, H147, and S254. S254 functions as the Schiff-base intermediate with substrate; via pyruvic acid; for decarboxylase activity in the catalytic mechanism. Position 254 is a pyruvic acid (Ser); by autocatalysis (S254). Residues 294–322 are disordered; sequence EVEPAPLPADEIKAEHDASPLVDNKKDDT. Positions 303-322 are enriched in basic and acidic residues; the sequence is DEIKAEHDASPLVDNKKDDT.

This sequence belongs to the phosphatidylserine decarboxylase family. PSD-B subfamily. Prokaryotic type I sub-subfamily. In terms of assembly, heterodimer of a large membrane-associated beta subunit and a small pyruvoyl-containing alpha subunit. It depends on pyruvate as a cofactor. Post-translationally, is synthesized initially as an inactive proenzyme. Formation of the active enzyme involves a self-maturation process in which the active site pyruvoyl group is generated from an internal serine residue via an autocatalytic post-translational modification. Two non-identical subunits are generated from the proenzyme in this reaction, and the pyruvate is formed at the N-terminus of the alpha chain, which is derived from the carboxyl end of the proenzyme. The autoendoproteolytic cleavage occurs by a canonical serine protease mechanism, in which the side chain hydroxyl group of the serine supplies its oxygen atom to form the C-terminus of the beta chain, while the remainder of the serine residue undergoes an oxidative deamination to produce ammonia and the pyruvoyl prosthetic group on the alpha chain. During this reaction, the Ser that is part of the protease active site of the proenzyme becomes the pyruvoyl prosthetic group, which constitutes an essential element of the active site of the mature decarboxylase.

Its subcellular location is the cell membrane. It catalyses the reaction a 1,2-diacyl-sn-glycero-3-phospho-L-serine + H(+) = a 1,2-diacyl-sn-glycero-3-phosphoethanolamine + CO2. It functions in the pathway phospholipid metabolism; phosphatidylethanolamine biosynthesis; phosphatidylethanolamine from CDP-diacylglycerol: step 2/2. In terms of biological role, catalyzes the formation of phosphatidylethanolamine (PtdEtn) from phosphatidylserine (PtdSer). In Salmonella paratyphi C (strain RKS4594), this protein is Phosphatidylserine decarboxylase proenzyme.